An 805-amino-acid chain; its full sequence is Mediator of RNA polymerase II transcription subunit 25 (805 aa).

Disordered stretches follow at residues 430-455 (GSAQNTQNSAPSSFTSTAPSMSGQTV) and 786-805 (SQSQGSSQGLPITPGGGFMN). 2 stretches are compositionally biased toward low complexity: residues 438–451 (SAPSSFTSTAPSMS) and 786–795 (SQSQGSSQGL).

It belongs to the Mediator complex subunit 25 family. Interacts with MYC2 (via N-terminus). MED25 competes with JAZ7 for binding to MYC2.

Its function is as follows. Component of the Mediator complex, a coactivator involved in the regulated transcription of nearly all RNA polymerase II-dependent genes. Mediator functions as a bridge to convey information from gene-specific regulatory proteins to the basal RNA polymerase II transcription machinery. Mediator is recruited to promoters by direct interactions with regulatory proteins and serves as a scaffold for the assembly of a functional pre-initiation complex with RNA polymerase II and the general transcription factors. Plays a positive role in wound-induced activation of jasmonate-responsive genes whose promoters are targeted by MYC2. The polypeptide is Mediator of RNA polymerase II transcription subunit 25 (Solanum lycopersicum (Tomato)).